The primary structure comprises 526 residues: Reelin domain-containing protein 1 (526 aa).

The first 23 residues, 1–23 (MRMQAALVGWACTTLCLASCSSA), serve as a signal peptide directing secretion. The 156-residue stretch at 24–179 (FSHGASTVAC…SAHSDDRMEP (156 aa)) folds into the Reelin domain. Residues 24–443 (FSHGASTVAC…PLGIQLRTPQ (420 aa)) lie on the Extracellular side of the membrane. 3 disordered regions span residues 242-272 (DAET…PTLE), 294-336 (FASS…TVTQ), and 370-398 (LQTS…LPQS). Positions 245–271 (TLSQPSSHTATEGSINQQPSGDSNPTL) are enriched in polar residues. The span at 385–396 (SEASRASASFLP) shows a compositional bias: polar residues. Residues 444-462 (LGILLCLSATLGMALAAGL) traverse the membrane as a helical segment. Topologically, residues 463–526 (RYLHTQYCHQ…PSVGSKKTVL (64 aa)) are cytoplasmic.

The protein resides in the membrane. The sequence is that of Reelin domain-containing protein 1 from Homo sapiens (Human).